Reading from the N-terminus, the 176-residue chain is Urease accessory protein UreE (176 aa).

The tract at residues Glu-134–Arg-176 is disordered.

It belongs to the UreE family.

The protein localises to the cytoplasm. In terms of biological role, involved in urease metallocenter assembly. Binds nickel. Probably functions as a nickel donor during metallocenter assembly. This Nitrosospira multiformis (strain ATCC 25196 / NCIMB 11849 / C 71) protein is Urease accessory protein UreE.